The sequence spans 267 residues: Mannose-specific lectin 1 (267 aa).

The first 24 residues, 1 to 24 (MAKSLVLSSLLLALLLAAPLASLA), serve as a signal peptide directing secretion. 2 consecutive Bulb-type lectin domains span residues 26–136 (NNVL…APNR) and 150–260 (RNVL…SPAR). Intrachain disulfides connect cysteine 54-cysteine 76 and cysteine 178-cysteine 203.

Heterotetramer of 2 domain 1 and 2 domain 2 chains arranged as a dimer of domain 1/domain 2 heterodimers.

In terms of biological role, mannose-specific lectin. Has weak agglutinating activity towards trypsin-treated erythrocytes from rabbit but not from human. This is Mannose-specific lectin 1 from Crocus vernus (Dutch crocus).